The chain runs to 628 residues: Glutamyl-tRNA(Gln) amidotransferase subunit E (628 aa).

Belongs to the GatB/GatE family. GatE subfamily. As to quaternary structure, heterodimer of GatD and GatE.

The catalysed reaction is L-glutamyl-tRNA(Gln) + L-glutamine + ATP + H2O = L-glutaminyl-tRNA(Gln) + L-glutamate + ADP + phosphate + H(+). Functionally, allows the formation of correctly charged Gln-tRNA(Gln) through the transamidation of misacylated Glu-tRNA(Gln) in organisms which lack glutaminyl-tRNA synthetase. The reaction takes place in the presence of glutamine and ATP through an activated gamma-phospho-Glu-tRNA(Gln). The GatDE system is specific for glutamate and does not act on aspartate. This chain is Glutamyl-tRNA(Gln) amidotransferase subunit E, found in Sulfurisphaera tokodaii (strain DSM 16993 / JCM 10545 / NBRC 100140 / 7) (Sulfolobus tokodaii).